The sequence spans 1362 residues: Bromodomain-containing protein 4B (1362 aa).

6 disordered regions span residues 22 to 57 (EGAQ…QPKR), 200 to 243 (SLGD…HPPA), 274 to 367 (LANH…DSKT), 476 to 639 (DEPE…SYEE), 699 to 941 (CLRK…TQSP), and 953 to 1349 (SQAP…MNFQ). A compositionally biased stretch (pro residues) spans 34–49 (QPQPQTPMMQTPPPEI). The Bromo 1 domain occupies 57–163 (RQTNQLQYLL…KLFLQKISEM (107 aa)). The span at 219–234 (TPTPPAVIRAPTPPQT) shows a compositional bias: pro residues. Positions 326–342 (PRKESGRQIRPIKKTEV) are enriched in basic and acidic residues. Positions 348–358 (PAPPDLHPQPA) are enriched in pro residues. The 110-residue stretch at 365-474 (SKTSEQLRYC…DVFEMRFAKM (110 aa)) folds into the Bromo 2 domain. Over residues 481–503 (APAPVPSPAPGPPAPSIKIPPPT) the composition is skewed to pro residues. The interval 503 to 521 (TSSDTSSDSSSDSESSSDS) is NPS region. A compositionally biased stretch (low complexity) spans 504 to 516 (SSDTSSDSSSDSE). A BID region region spans residues 542 to 597 (QLAALSQPQPNKPKKKEREKRKEKHKRKEEVEETRKGRIREPPAKKPKKSVQVSGG). Basic residues predominate over residues 553–568 (KPKKKEREKRKEKHKR). Residues 569–585 (KEEVEETRKGRIREPPA) are compositionally biased toward basic and acidic residues. Pro residues predominate over residues 606 to 621 (PPPVTRPARPAPPPAP). The NET domain maps to 623–707 (ESSEEDTQRC…SCLRKKRKPQ (85 aa)). Basic and acidic residues predominate over residues 628 to 639 (DTQRCRPMSYEE). Over residues 722–737 (SYSSSESESSSESSTS) the composition is skewed to low complexity. Residues 750–766 (QKKKGHSGRESRKHHHP) are compositionally biased toward basic residues. Composition is skewed to pro residues over residues 772 to 793 (IAPP…PPPS) and 871 to 889 (PARP…PHHQ). Residues 893-905 (HVHHHHHHHHHAQ) are compositionally biased toward basic residues. The span at 926–941 (YLQQLHKSQQPPTQSP) shows a compositional bias: polar residues. Composition is skewed to low complexity over residues 953–963 (SQAPMAAPAQS), 977–1006 (SSAS…QPAG), 1014–1028 (QQQQ…PALQ), and 1041–1050 (HQQAKQQQVI). The C-terminal (CTD) region stretch occupies residues 1061–1361 (RQQKQETYPG…LMEIFEQNLF (301 aa)). Positions 1086 to 1099 (QVPPYPGLTHPPSP) are enriched in pro residues. Over residues 1186-1207 (PEKEKQKQEPKTPVAPKKDLKI) the composition is skewed to basic and acidic residues. The span at 1224-1234 (PTSAGKSTSDS) shows a compositional bias: polar residues. Basic and acidic residues predominate over residues 1236 to 1293 (ELFRRQAREKEERERALKHQAEQAERMRREQERMRTREDDDVQDQTRKAHEEARRRQE). A compositionally biased stretch (low complexity) spans 1308–1319 (PAAPSPAQSSQP). Over residues 1322 to 1334 (DQREMARKREQER) the composition is skewed to basic and acidic residues.

This sequence belongs to the BET family.

It localises to the nucleus. The protein localises to the chromosome. Its function is as follows. Chromatin reader protein that recognizes and binds acetylated histones and plays a key role in transmission of epigenetic memory across cell divisions and transcription regulation. Remains associated with acetylated chromatin throughout the entire cell cycle and provides epigenetic memory for postmitotic G1 gene transcription by preserving acetylated chromatin status and maintaining high-order chromatin structure. During interphase, plays a key role in regulating the transcription of signal-inducible genes by associating with the P-TEFb complex and recruiting it to promoters. The protein is Bromodomain-containing protein 4B (brd4-b) of Xenopus laevis (African clawed frog).